The sequence spans 3262 residues: Striated muscle-specific serine/threonine-protein kinase (3262 aa).

Positions 1-33 are disordered; sequence MQKARGTRGEDAGTRAPPSPGVPPKRAKVGAGR. Arginine 33 carries the omega-N-methylarginine modification. The Ig-like 1 domain maps to 45–126; the sequence is PVFLRPLKNA…GQASCEAVLT (82 aa). Serine 141 bears the Phosphoserine mark. Disordered stretches follow at residues 155-185, 198-226, 280-720, and 814-875; these read RAFSTPTGGSDTLVGTSLDTPPTSVTGTSEE, EQEAGSGGGTRPLPGSPRQAQTTGAGPRH, GLHR…VSAG, and LAVR…APPT. Positions 158–185 are enriched in polar residues; that stretch reads STPTGGSDTLVGTSLDTPPTSVTGTSEE. Pro residues predominate over residues 301 to 317; the sequence is PALPPPSKSALLPPPSP. 2 positions are modified to phosphoserine: serine 368 and serine 375. Threonine 379 bears the Phosphothreonine mark. 2 positions are modified to phosphoserine: serine 382 and serine 385. The segment covering 404-422 has biased composition (basic and acidic residues); sequence ILDKLQFFEERRRSLERSD. The residue at position 423 (serine 423) is a Phosphoserine. At threonine 453 the chain carries Phosphothreonine. A phosphoserine mark is found at serine 457, serine 463, serine 493, serine 511, and serine 531. The span at 459–473 shows a compositional bias: basic and acidic residues; it reads EELRSPRGSVAERRR. Residues 510–522 show a composition bias toward basic and acidic residues; sequence TSREELVRSHESL. Residues 543-552 are compositionally biased toward polar residues; that stretch reads RPSTPKTSRA. Serine 554 is subject to Phosphoserine. Basic and acidic residues-rich tracts occupy residues 624–638 and 663–680; these read PESRTKAPSGRKREP and EKNRAGPEAEKRLRRGPE. The Ig-like 2 domain occupies 727–815; the sequence is PVFEIPLQNM…GQATCASSLA (89 aa). Residues 820–830 are compositionally biased toward polar residues; that stretch reads GSTSPFSSPIT. Ig-like domains lie at 874-963, 968-1062, and 1069-1157; these read PTFK…ARLE, PESR…ARLT, and PLFT…AQLY. An intrachain disulfide couples cysteine 994 to cysteine 1046. A phosphoserine mark is found at serine 1133 and serine 1177. The disordered stretch occupies residues 1162–1185; it reads RTAASGPSSKLEKMPSIPEEPEHG. The 91-residue stretch at 1193 to 1283 folds into the Ig-like 6 domain; it reads PDFLRPLQDL…AACYAHLYVT (91 aa). The 98-residue stretch at 1290–1387 folds into the Fibronectin type-III 1 domain; sequence PDGAPEVVAV…PSEPVQLLEH (98 aa). 2 Ig-like domains span residues 1389–1485 and 1490–1578; these read PPLE…VTLE and PRFE…AELS. Cysteines 1413 and 1469 form a disulfide. One can recognise a Protein kinase 1 domain in the interval 1606–1859; that stretch reads YDIHQEIGRG…AEETLEHPWF (254 aa). ATP is bound by residues 1612 to 1620 and lysine 1635; that span reads IGRGAFSYL. Residue aspartate 1724 is the Proton acceptor of the active site. Positions 1913 to 2571 are disordered; it reads MPRRQPPSGG…SQPNLSSSVQ (659 aa). Over residues 1918–1927 the composition is skewed to low complexity; sequence PPSGGLSSSS. A compositionally biased stretch (basic and acidic residues) spans 1980–1990; sequence EQERTPSKDQE. Serine 1993, serine 2004, serine 2019, serine 2020, and serine 2042 each carry phosphoserine. Positions 2009-2019 are enriched in basic and acidic residues; it reads SPRRPELRRGS. Arginine 2060 is modified (asymmetric dimethylarginine; alternate). Arginine 2060 is modified (omega-N-methylarginine; alternate). The span at 2069-2081 shows a compositional bias: low complexity; it reads AQRLQALRQRLLR. Phosphoserine occurs at positions 2114 and 2135. The residue at position 2144 (arginine 2144) is an Omega-N-methylarginine. Over residues 2168-2179 the composition is skewed to polar residues; the sequence is ESPSLSALSETQ. Serine 2182 and serine 2207 each carry phosphoserine. The segment covering 2193 to 2207 has biased composition (polar residues); it reads ITKSPEPSAVTSRDS. Pro residues predominate over residues 2208–2218; that stretch reads PQPPEPQPVPE. The span at 2219-2229 shows a compositional bias: basic and acidic residues; the sequence is KVPEPKPEPVR. Residues 2230–2268 show a composition bias toward low complexity; it reads AAKPAQPPLALQMPTQPLTPYAQIMQSLQLSSPTLSPQD. Over residues 2337–2348 the composition is skewed to basic and acidic residues; sequence FEAKFKRSRESP. The segment covering 2349–2358 has biased composition (low complexity); the sequence is LSRGLRLLSR. Residues 2359–2375 show a composition bias toward basic and acidic residues; the sequence is SRSEERGPFRGAEDDGI. Serine 2379 is modified (phosphoserine). Position 2383 is a phosphothreonine (threonine 2383). The span at 2387–2398 shows a compositional bias: basic and acidic residues; it reads LVRRPERSRSVQ. 6 positions are modified to phosphoserine: serine 2413, serine 2417, serine 2441, serine 2442, serine 2447, and serine 2451. A compositionally biased stretch (low complexity) spans 2461–2487; the sequence is SSTLERLSSRLQRSGSSEDSGGASGRS. A compositionally biased stretch (polar residues) spans 2513–2523; sequence QLGSQTGATTP. A phosphoserine mark is found at serine 2524 and serine 2527. The segment covering 2524 to 2543 has biased composition (low complexity); it reads SAESLGSEASGTSGSSAPGE. Positions 2546–2557 are enriched in basic residues; it reads SRHRWGLSRLRK. At serine 2562 the chain carries Phosphoserine. The segment covering 2562 to 2571 has biased composition (polar residues); it reads SQPNLSSSVQ. Positions 2586–2676 constitute an Ig-like 9 domain; sequence PPVFHIKLKD…GSITSSCTVA (91 aa). Cysteines 2608 and 2660 form a disulfide. The Fibronectin type-III 2 domain maps to 2683–2777; the sequence is KLAPPEVPQT…KVFIRGTPDS (95 aa). Disordered regions lie at residues 2756–2832, 2857–2899, and 2912–2960; these read RAGQ…MSAN, ATQQ…PAPS, and APPA…PQKP. Threonine 2774 is subject to Phosphothreonine. 2 stretches are compositionally biased toward low complexity: residues 2775-2789 and 2803-2831; these read PDSPAQPAAAPRDAP and PTSLAPTPALAPPASQASTLSPSTSSMSA. The residue at position 2777 (serine 2777) is a Phosphoserine. The Fibronectin type-III 3 domain occupies 2865 to 2968; that stretch reads PPSIVVTPSE…KPYTFLEEKA (104 aa). Over residues 2883–2899 the composition is skewed to polar residues; it reads GTLTPTSSPQGVKPAPS. Over residues 2913–2927 the composition is skewed to pro residues; it reads PPAPQAPAPEPPPEP. A compositionally biased stretch (polar residues) spans 2943–2953; that stretch reads SSPTPESTTLR. Residue serine 2944 is modified to Phosphoserine. The region spanning 2946–3213 is the Protein kinase 2 domain; it reads TPESTTLRQG…LQDCLAHPWL (268 aa). Aspartate 3080 (proton acceptor) is an active-site residue.

The protein belongs to the protein kinase superfamily. CAMK Ser/Thr protein kinase family. Interacts with MTM1. Isoform 3 is found as a monomer or homodimer. May be autophosphorylated. Isoform 1 is preferentially expressed in striated muscle. Non-kinase form such as isoform 3 is predominantly expressed in the aorta. Isoform 3 appears to be expressed only in highly differentiated ASMC in normal vessel walls and down-regulated in dedifferentiated ASMC in vivo. In response to vascular injuries ASMC dedifferentiate and change from a quiescent and contractile phenotype to a proliferative and synthetic phenotype. This proliferation of vascular smooth muscle cells is one of the most prominent features of atherosclerosis. Isoform 1 and isoform 4 are expressed in cardiomyocytes of the developing heart.

The protein localises to the nucleus. It carries out the reaction L-seryl-[protein] + ATP = O-phospho-L-seryl-[protein] + ADP + H(+). The catalysed reaction is L-threonyl-[protein] + ATP = O-phospho-L-threonyl-[protein] + ADP + H(+). Isoform 3 may have a role in regulating the growth and differentiation of arterial smooth muscle cells. The sequence is that of Striated muscle-specific serine/threonine-protein kinase (Speg) from Mus musculus (Mouse).